The chain runs to 295 residues: Acetyl-coenzyme A carboxylase carboxyl transferase subunit beta (295 aa).

The 270-residue stretch at 25 to 294 (VWTKCTSCEQ…PFNAEELSDT (270 aa)) folds into the CoA carboxyltransferase N-terminal domain. 4 residues coordinate Zn(2+): Cys-29, Cys-32, Cys-48, and Cys-51. A C4-type zinc finger spans residues 29 to 51 (CTSCEQVLYRDELKRHLEVCPKC).

This sequence belongs to the AccD/PCCB family. In terms of assembly, acetyl-CoA carboxylase is a heterohexamer composed of biotin carboxyl carrier protein (AccB), biotin carboxylase (AccC) and two subunits each of ACCase subunit alpha (AccA) and ACCase subunit beta (AccD). Zn(2+) serves as cofactor.

It is found in the cytoplasm. The enzyme catalyses N(6)-carboxybiotinyl-L-lysyl-[protein] + acetyl-CoA = N(6)-biotinyl-L-lysyl-[protein] + malonyl-CoA. It functions in the pathway lipid metabolism; malonyl-CoA biosynthesis; malonyl-CoA from acetyl-CoA: step 1/1. Its function is as follows. Component of the acetyl coenzyme A carboxylase (ACC) complex. Biotin carboxylase (BC) catalyzes the carboxylation of biotin on its carrier protein (BCCP) and then the CO(2) group is transferred by the transcarboxylase to acetyl-CoA to form malonyl-CoA. In Mannheimia succiniciproducens (strain KCTC 0769BP / MBEL55E), this protein is Acetyl-coenzyme A carboxylase carboxyl transferase subunit beta.